Consider the following 1061-residue polypeptide: Transmembrane protease serine 9 (1061 aa).

Over 3–31 the chain is Cytoplasmic; the sequence is PAAPDLQPVPEVTKGVPVPTPDSGCCRAA. A helical membrane pass occupies residues 32 to 52; that stretch reads VTTVVAISVASLTLGVLSAFL. The Extracellular segment spans residues 53–1061; sequence SAQGVQVEHT…LGWIGQNIRE (1009 aa). The 38-residue stretch at 155–192 folds into the LDL-receptor class A domain; the sequence is HCPGNAFSCQNSQCVSKENPECDDRVDCSDGSDEAQCD. Intrachain disulfides connect cysteine 156/cysteine 168, cysteine 163/cysteine 182, cysteine 176/cysteine 191, and cysteine 230/cysteine 246. In terms of domain architecture, Peptidase S1 1 spans 205-438; it reads IVGGAEAAPG…LRDWILEVTS (234 aa). Catalysis depends on charge relay system residues histidine 245 and aspartate 294. Cystine bridges form between cysteine 328-cysteine 395, cysteine 360-cysteine 374, and cysteine 385-cysteine 414. The active-site Charge relay system is serine 389. The interval 443–499 is disordered; the sequence is PVVPTEAPAPITPSTPWPTSPESRVPNTTAKPTVAPTPAPLHPSTAAKPQECGARPA. The span at 452 to 461 shows a compositional bias: pro residues; sequence PITPSTPWPT. Over residues 462 to 476 the composition is skewed to low complexity; that stretch reads SPESRVPNTTAKPTV. N-linked (GlcNAc...) asparagine glycosylation is present at asparagine 469. One can recognise a Peptidase S1 2 domain in the interval 506–738; it reads IVGGISAVSG…LKDWILKAMS (233 aa). Cysteine 531 and cysteine 547 are joined by a disulfide. The active-site Charge relay system is histidine 546. N-linked (GlcNAc...) asparagine glycosylation occurs at asparagine 549. Aspartate 594 acts as the Charge relay system in catalysis. Intrachain disulfides connect cysteine 628–cysteine 695, cysteine 660–cysteine 674, and cysteine 685–cysteine 714. Asparagine 640 and asparagine 665 each carry an N-linked (GlcNAc...) asparagine glycan. Serine 689 (charge relay system) is an active-site residue. A compositionally biased stretch (low complexity) spans 740–752; it reads DPSSTAHPHTSST. Disordered regions lie at residues 740–771 and 790–810; these read DPSSTAHPHTSSTRLIPSQPPTTTAAGLIPEA and LNTTLSARSTTTRRQTPAPGT. N-linked (GlcNAc...) asparagine glycosylation occurs at asparagine 791. The segment covering 792 to 808 has biased composition (low complexity); the sequence is TTLSARSTTTRRQTPAP. In terms of domain architecture, Peptidase S1 3 spans 830 to 1060; the sequence is IVGGSAASLG…VLGWIGQNIR (231 aa). 4 disulfides stabilise this stretch: cysteine 856–cysteine 872, cysteine 951–cysteine 1017, cysteine 982–cysteine 996, and cysteine 1007–cysteine 1036.

This sequence belongs to the peptidase S1 family. Proteolytically cleaved to generate 3 independent serine protease chains. The cleaved chains may remain attached to the membrane thanks to disulfide bonds. It is unclear whether cleavage always takes place.

The protein localises to the cell membrane. Inhibited by serine protease inhibitors PMSF and 4-(2-aminoethyl)benzenesulfonyl fluoride, but not by EDTA. In terms of biological role, serase-1 and serase-2 are serine proteases that hydrolyze the peptides N-t-Boc-Gln-Ala-Arg-AMC and N-t-Boc-Gln-Gly-Arg-AMC. In contrast, N-t-Boc-Ala-Phe-Lys-AMC and N-t-Boc-Ala-Pro-Ala-AMC are not significantly hydrolyzed. The chain is Transmembrane protease serine 9 (Tmprss9) from Rattus norvegicus (Rat).